A 2148-amino-acid chain; its full sequence is Polyketide synthase 1 (2148 aa).

The interval 19-261 (FIFGDQSSCN…TPLAVHAPYH (243 aa)) is N-terminal acylcarrier protein transacylase domain (SAT). A Ketosynthase family 3 (KS3) domain is found at 394–829 (ESKIAIIGMS…GGNTALLVED (436 aa)). Catalysis depends on for beta-ketoacyl synthase activity residues Cys566, His701, and His745. The interval 929–1233 (AFVFSGQGSQ…PSLMRNKDGW (305 aa)) is malonyl-CoA:ACP transacylase (MAT) domain. Residue Ser1018 is the For acyl/malonyl transferase activity of the active site. The segment at 1310–1624 (TASVHRIVHE…RKVLNTAMPP (315 aa)) is product template (PT) domain. The tract at residues 1314–1447 (HRIVHESVEK…SSLHFEQPKV (134 aa)) is N-terminal hotdog fold. In terms of domain architecture, PKS/mFAS DH spans 1314–1619 (HRIVHESVEK…FQGIPRKVLN (306 aa)). His1346 functions as the Proton acceptor; for dehydratase activity in the catalytic mechanism. Positions 1474–1619 (LNSRMSSGVI…FQGIPRKVLN (146 aa)) are C-terminal hotdog fold. The active-site Proton donor; for dehydratase activity is Asp1533. The disordered stretch occupies residues 1619 to 1655 (NTAMPPPKSQNEAPVRSGPAKPAAKPPRSASSEHSGH). The segment covering 1634 to 1650 (RSGPAKPAAKPPRSASS) has biased composition (low complexity). One can recognise a Carrier 1 domain in the interval 1678 to 1752 (RNPMLPVFKI…DLAAHLGLDT (75 aa)). Ser1712 is modified (O-(pantetheine 4'-phosphoryl)serine). Low complexity-rich tracts occupy residues 1757 to 1769 (QSSG…GGLS) and 1779 to 1796 (TSSV…SVSG). The interval 1757 to 1796 (QSSGQSSSFGGLSPRSDSIGEITSSVTTPPSLSPRSSVSG) is disordered. In terms of domain architecture, Carrier 2 spans 1793-1870 (SVSGSQCKDV…SFKHMFQQGH (78 aa)). Ser1830 bears the O-(pantetheine 4'-phosphoryl)serine mark. The tract at residues 1882–2146 (LKQYRATSTL…ERVAAFIRST (265 aa)) is thioesterase (TE) domain. The active-site For thioesterase activity is Ser1973.

Its function is as follows. Polyketide synthase; part of the Pks1 gene cluster that mediates the biosynthesis of an anthraquinone derivative pigment that contributes to conidial pigmentation that provides protection from UV radiation, heat and cold stress. The polyketide synthase Pks1 produces 1-acetyl-2,4,6,8-tetrahydroxy-9,10-anthraquinone though condensation of acetyl-CoA with malonyl-CoA. The dehydratase EthD and the laccase Mlac1 further convert the anthraquinone derivative into the final conidial pigment. The polypeptide is Polyketide synthase 1 (Metarhizium anisopliae (strain ARSEF 549)).